The chain runs to 235 residues: Phosphoribosylaminoimidazole-succinocarboxamide synthase (235 aa).

It belongs to the SAICAR synthetase family.

It catalyses the reaction 5-amino-1-(5-phospho-D-ribosyl)imidazole-4-carboxylate + L-aspartate + ATP = (2S)-2-[5-amino-1-(5-phospho-beta-D-ribosyl)imidazole-4-carboxamido]succinate + ADP + phosphate + 2 H(+). The protein operates within purine metabolism; IMP biosynthesis via de novo pathway; 5-amino-1-(5-phospho-D-ribosyl)imidazole-4-carboxamide from 5-amino-1-(5-phospho-D-ribosyl)imidazole-4-carboxylate: step 1/2. In Streptococcus thermophilus (strain CNRZ 1066), this protein is Phosphoribosylaminoimidazole-succinocarboxamide synthase.